Reading from the N-terminus, the 147-residue chain is Deoxyuridine 5'-triphosphate nucleotidohydrolase (147 aa).

R24 contacts Mg(2+). DUTP-binding positions include 68–70 (PRS), 82–85 (GVID), Y88, G93, I95, and R111.

This sequence belongs to the dUTPase family. Mg(2+) serves as cofactor.

It carries out the reaction dUTP + H2O = dUMP + diphosphate + H(+). Functionally, this enzyme is involved in nucleotide metabolism: it produces dUMP, the immediate precursor of thymidine nucleotides and it decreases the intracellular concentration of dUTP so that uracil cannot be incorporated into DNA. This Camelus protein is Deoxyuridine 5'-triphosphate nucleotidohydrolase (OPG046).